Here is a 590-residue protein sequence, read N- to C-terminus: Ovarian abundant message protein (590 aa).

Residues 1-71 (MQGTDNAPPG…SPGQPLVEEQ (71 aa)) are disordered. A compositionally biased stretch (basic residues) spans 18-29 (SPRRIRHVRRHY). Repeat copies occupy residues 66 to 71 (PLVEEQ), 72 to 77 (PLVEER), 78 to 83 (PPVEEQ), 84 to 89 (PLVEEQ), 90 to 95 (PLVEEQ), 96 to 101 (PLVEEQ), 102 to 107 (PLVEEQ), 108 to 113 (PLVEGQ), 114 to 119 (PLVEEQ), 120 to 125 (PLVEGQ), 126 to 131 (PPVEGQ), 132 to 137 (PLVEEQ), 138 to 143 (PLVEGQ), 144 to 149 (PLVEGQ), 150 to 155 (PLVEGQ), 156 to 161 (PLVEGQ), 162 to 167 (PLVGGQ), 168 to 173 (PLVGGQ), 174 to 179 (PLVEGQ), 180 to 185 (PLVEGQ), 300 to 305 (PLAGAP), 306 to 311 (PLAGVP), 312 to 317 (PLAVAL), 318 to 323 (PLAGAP), 324 to 329 (PLAGVP), 330 to 335 (PLAGAP), and 336 to 341 (PLAGAL). The interval 66–185 (PLVEEQPLVE…VEGQPLVEGQ (120 aa)) is 20 X 6 AA tandem repeats of P-[LP]-V-[EG]-[EG]-[QR]. Residues 300–347 (PLAGAPPLAGVPPLAVALPLAGAPPLAGVPPLAGAPPLAGALPRAGVL) form an 8 X 6 AA approximate tandem repeats of P-L-A-[GV]-[AV]-[PL] region. A 2-8; approximate repeat occupies 342 to 347 (PRAGVL). Repeat copies occupy residues 348–353 (RRAGVL), 354–359 (RRAGVL), 360–365 (RRAGVL), 366–371 (RRAGVL), 372–377 (RRAGVL), 378–383 (RRAGVL), 384–389 (RRAGVL), 390–395 (RRAGVL), 396–401 (RRAGVL), 402–407 (RRADVL), 408–413 (RRADVV), 419–424 (QQLADV), 425–430 (QRLADV), 431–436 (QRLADV), 437–442 (QRLADV), and 443–448 (QRLADV). Positions 348-413 (RRAGVLRRAG…ADVLRRADVV (66 aa)) are 11 X 6 AA tandem repeats of approximate R-R-A-[GD]-V-[LV]. The interval 419-454 (QQLADVQRLADVQRLADVQRLADVQRLADVQRLVCV) is 6 X 6 AA approximate tandem repeats of Q-[QR]-L-A-D-V. A 4-6; approximate repeat occupies 449-454 (QRLVCV).

In terms of tissue distribution, somatic ovarian tissue.

This Ascaris suum (Pig roundworm) protein is Ovarian abundant message protein (OAM).